A 478-amino-acid chain; its full sequence is Aspartate ammonia-lyase (478 aa).

5 residues coordinate L-aspartate: threonine 109, serine 148, threonine 149, asparagine 150, and threonine 195. The segment at glycine 326 to asparagine 335 is SS loop. Catalysis depends on serine 327, which acts as the Proton acceptor. L-aspartate contacts are provided by serine 328 and lysine 333.

The protein belongs to the class-II fumarase/aspartase family. Aspartase subfamily. As to quaternary structure, homotetramer.

The enzyme catalyses L-aspartate = fumarate + NH4(+). Its function is as follows. Catalyzes the reversible conversion of L-aspartate to fumarate and ammonia. This is Aspartate ammonia-lyase from Pseudomonas fluorescens.